A 426-amino-acid polypeptide reads, in one-letter code: Histidine--tRNA ligase (426 aa).

This sequence belongs to the class-II aminoacyl-tRNA synthetase family. As to quaternary structure, homodimer.

It is found in the cytoplasm. It carries out the reaction tRNA(His) + L-histidine + ATP = L-histidyl-tRNA(His) + AMP + diphosphate + H(+). This chain is Histidine--tRNA ligase, found in Streptococcus equi subsp. zooepidemicus (strain MGCS10565).